Here is a 463-residue protein sequence, read N- to C-terminus: NEDD8-activating enzyme E1 catalytic subunit (463 aa).

Ala2 is modified (N-acetylalanine). The segment at 53–70 (HPDFEPSTESLQFLLDTC) is interaction with UBE2M N-terminus. ATP contacts are provided by residues 100–124 (DMDTIDVSNLNRQFLFRPKDIGRPK) and 148–171 (IQDFNDTFYRQFHIIVCGLDSIIA). 2 interaction with UBE2M N-terminus regions span residues 157–161 (RQFHI) and 192–217 (PSSIVPLIDGGTEGFKGNARVILPGM). Positions 227-229 (LYP) are interaction with NEDD8. The Glycyl thioester intermediate role is filled by Cys237. Interaction with NAE1 regions lie at residues 242-248 (MPRLPEH) and 292-295 (YNIR). The tract at residues 331-338 (IATSAYIP) is interaction with UBE2M N-terminus. The interval 352–357 (YTYTFE) is interaction with NEDD8. An interaction with UBE2M core domain region spans residues 368-463 (SQLPQNIQFS…TVLFKLHFTS (96 aa)).

This sequence belongs to the ubiquitin-activating E1 family. UBA3 subfamily. Heterodimer of UBA3 and NAE1. Interacts with NEDD8, UBE2F and UBE2M. Binds ESR1 and ESR2 with bound steroid ligand. Interacts with TBATA. In terms of tissue distribution, ubiquitously expressed.

It catalyses the reaction ATP + [NEDD8 protein] + [E1 NEDD8-activating enzyme]-L-cysteine = AMP + diphosphate + [E1 NEDD8-activating enzyme]-S-[NEDD8 protein]-yl-L-cysteine.. It functions in the pathway protein modification; protein neddylation. Binding of TP53BP2 to the regulatory subunit NAE1 decreases activity. Functionally, catalytic subunit of the dimeric UBA3-NAE1 E1 enzyme. E1 activates NEDD8 by first adenylating its C-terminal glycine residue with ATP, thereafter linking this residue to the side chain of the catalytic cysteine, yielding a NEDD8-UBA3 thioester and free AMP. E1 finally transfers NEDD8 to the catalytic cysteine of UBE2M. Down-regulates steroid receptor activity. Necessary for cell cycle progression. This chain is NEDD8-activating enzyme E1 catalytic subunit (UBA3), found in Homo sapiens (Human).